The following is a 501-amino-acid chain: ATP synthase subunit alpha (501 aa).

169-176 (GDRQTGKT) lines the ATP pocket.

The protein belongs to the ATPase alpha/beta chains family. F-type ATPases have 2 components, CF(1) - the catalytic core - and CF(0) - the membrane proton channel. CF(1) has five subunits: alpha(3), beta(3), gamma(1), delta(1), epsilon(1). CF(0) has three main subunits: a(1), b(2) and c(9-12). The alpha and beta chains form an alternating ring which encloses part of the gamma chain. CF(1) is attached to CF(0) by a central stalk formed by the gamma and epsilon chains, while a peripheral stalk is formed by the delta and b chains.

It is found in the cell membrane. The catalysed reaction is ATP + H2O + 4 H(+)(in) = ADP + phosphate + 5 H(+)(out). Produces ATP from ADP in the presence of a proton gradient across the membrane. The alpha chain is a regulatory subunit. In Streptococcus pneumoniae serotype 4 (strain ATCC BAA-334 / TIGR4), this protein is ATP synthase subunit alpha.